We begin with the raw amino-acid sequence, 261 residues long: Short-chain-enoyl-CoA hydratase (261 aa).

Catalysis depends on glutamate 114, which acts as the Nucleophile. Glutamate 134 (proton acceptor) is an active-site residue.

Belongs to the enoyl-CoA hydratase/isomerase family. As to quaternary structure, homotetramer.

It catalyses the reaction a short-chain (3S)-3-hydroxyacyl-CoA = a short-chain (2E)-enoyl-CoA + H2O. The protein operates within lipid metabolism; butanoate metabolism. Its function is as follows. Catalyzes the reversible hydration of crotonyl-CoA. Can also use hexenoyl-CoA but not higher analogs. This chain is Short-chain-enoyl-CoA hydratase (crt), found in Clostridium acetobutylicum (strain ATCC 824 / DSM 792 / JCM 1419 / IAM 19013 / LMG 5710 / NBRC 13948 / NRRL B-527 / VKM B-1787 / 2291 / W).